The sequence spans 370 residues: DNA replication and repair protein RecF (370 aa).

Residue 30 to 37 coordinates ATP; the sequence is GENAQGKT.

It belongs to the RecF family.

It localises to the cytoplasm. In terms of biological role, the RecF protein is involved in DNA metabolism; it is required for DNA replication and normal SOS inducibility. RecF binds preferentially to single-stranded, linear DNA. It also seems to bind ATP. This is DNA replication and repair protein RecF from Staphylococcus aureus (strain bovine RF122 / ET3-1).